The chain runs to 631 residues: MSVGVPVNPSSSSQLPAAPTTTTRRRVADSQEDHSHVNTVGGGNAVVYVPDEEETATSCCGGGGGGGSLSCCPSGSHHNYLVGFLSLRKFRLVWMLMVENKSKWTAGIARNMRSTTNLGRFILTLLSILVVTFFLIVALSGGVGRRRKHVEKHEFVVSIHPRPTIEKIIREDESSNSFQVLVPKTTSIPEIWNQPEVGNYQKCVARPKNQRPIKQTNGYLLVHANGGLNQMRTGICDMVAIAKIMNATLVLPFLDHSSFWSDPSSFKDIFDWKHFIKVLAEDVNIVEYLPQEFASIKPLEKNPVSWSKSSYYRNSISKLLKKHKVIVFNHTDSRLANNSPPPSIQRLRCRANYEALRYSEDIENLSNVLSSRLRENNEPYLALHLRYEKDMLAFTGCNHSLSNEESIDLEKMRFSIPHWKEKVINGTERRLEGNCPMTPREAAVFLKAMGFPSTTNIYIVAGKIYGQNSMTAFHEEFPNVFFHNTLATEEELSTIKPYQNRLAALDYNLALESDIFAYTYDGNMAKAVQGHRRFEGFRKTINPDRQRFVRLIDRLDAGLISWEDFSSKVKKMHQHRIGAPYLRQPGKAGMSPKLEENFYANPLPGCVCDTSEEQTGLNRFERPSLRAQSLR.

The span at 1–13 shows a compositional bias: low complexity; the sequence is MSVGVPVNPSSSS. Residues 1 to 36 are disordered; the sequence is MSVGVPVNPSSSSQLPAAPTTTTRRRVADSQEDHSH. Residues 1 to 120 are Cytoplasmic-facing; sequence MSVGVPVNPS…NMRSTTNLGR (120 aa). The segment covering 26–36 has biased composition (basic and acidic residues); the sequence is RVADSQEDHSH. The chain crosses the membrane as a helical; Signal-anchor for type II membrane protein span at residues 121–141; it reads FILTLLSILVVTFFLIVALSG. Residues 142-631 lie on the Lumenal side of the membrane; the sequence is GVGRRRKHVE…RPSLRAQSLR (490 aa). Asn246, Asn329, and Asn364 each carry an N-linked (GlcNAc...) asparagine glycan. 384–386 lines the substrate pocket; the sequence is HLR. Residues Asn398 and Asn425 are each glycosylated (N-linked (GlcNAc...) asparagine).

Belongs to the glycosyltransferase GT106 family. In terms of tissue distribution, ubiquitous. Strong expression in young seedlings, particularly at the junction between hypocotyl and root, in emerging cotyledons, and in parts of the roots. Also detected in the inflorescence (sepals, petals, mature pollen and siliques) and rosette leaves.

The protein localises to the golgi apparatus membrane. It participates in glycan metabolism. In terms of biological role, glycosyltransferase required for normal cell adhesion and cell wall integrity. In Arabidopsis thaliana (Mouse-ear cress), this protein is Protein FRIABLE 1.